Reading from the N-terminus, the 180-residue chain is Large ribosomal subunit protein uL5 (180 aa).

It belongs to the universal ribosomal protein uL5 family. In terms of assembly, part of the 50S ribosomal subunit; part of the 5S rRNA/L5/L18/L25 subcomplex. Contacts the 5S rRNA and the P site tRNA. Forms a bridge to the 30S subunit in the 70S ribosome.

In terms of biological role, this is one of the proteins that bind and probably mediate the attachment of the 5S RNA into the large ribosomal subunit, where it forms part of the central protuberance. In the 70S ribosome it contacts protein S13 of the 30S subunit (bridge B1b), connecting the 2 subunits; this bridge is implicated in subunit movement. Contacts the P site tRNA; the 5S rRNA and some of its associated proteins might help stabilize positioning of ribosome-bound tRNAs. This is Large ribosomal subunit protein uL5 from Clostridium acetobutylicum (strain ATCC 824 / DSM 792 / JCM 1419 / IAM 19013 / LMG 5710 / NBRC 13948 / NRRL B-527 / VKM B-1787 / 2291 / W).